The primary structure comprises 62 residues: Large ribosomal subunit protein uL30 (62 aa).

It belongs to the universal ribosomal protein uL30 family. As to quaternary structure, part of the 50S ribosomal subunit.

The protein is Large ribosomal subunit protein uL30 of Staphylococcus carnosus (strain TM300).